Here is a 245-residue protein sequence, read N- to C-terminus: Biosynthetic peptidoglycan transglycosylase (245 aa).

The chain crosses the membrane as a helical span at residues 24–44 (LVVIGAWLAGILLFSFLPVPF).

This sequence belongs to the glycosyltransferase 51 family.

The protein resides in the cell inner membrane. It carries out the reaction [GlcNAc-(1-&gt;4)-Mur2Ac(oyl-L-Ala-gamma-D-Glu-L-Lys-D-Ala-D-Ala)](n)-di-trans,octa-cis-undecaprenyl diphosphate + beta-D-GlcNAc-(1-&gt;4)-Mur2Ac(oyl-L-Ala-gamma-D-Glu-L-Lys-D-Ala-D-Ala)-di-trans,octa-cis-undecaprenyl diphosphate = [GlcNAc-(1-&gt;4)-Mur2Ac(oyl-L-Ala-gamma-D-Glu-L-Lys-D-Ala-D-Ala)](n+1)-di-trans,octa-cis-undecaprenyl diphosphate + di-trans,octa-cis-undecaprenyl diphosphate + H(+). The protein operates within cell wall biogenesis; peptidoglycan biosynthesis. Its function is as follows. Peptidoglycan polymerase that catalyzes glycan chain elongation from lipid-linked precursors. The polypeptide is Biosynthetic peptidoglycan transglycosylase (Pectobacterium atrosepticum (strain SCRI 1043 / ATCC BAA-672) (Erwinia carotovora subsp. atroseptica)).